The sequence spans 149 residues: MVDDAGAAESQRGKQTPAHSLEQLRRLPLPPPQIRIRPWWFPVQELRDPLVFYLEAWLADELFGPDRAIIPEMEWTSQALLTVDIVDSGNLVEITVFGRPRVQNRVKSMLLCLAWFHREHRARAEKMKHLEKNLKAHASDPHSPQDPVA.

The interval 1–22 (MVDDAGAAESQRGKQTPAHSLE) is disordered. The KH; atypical domain occupies 49 to 110 (PLVFYLEAWL…RVQNRVKSML (62 aa)).

The protein belongs to the KHDC1 family. Component of the subcortical maternal complex (SCMC), at least composed of NLRP5, KHDC3L, OOEP, and TLE6 isoform 1. Within the complex, interacts with NLRP5, KHDC3L and TLE6 isoform 1. As part of the SCMC interacts with the SCMC-associated protein NLRP4F. The SCMC may facilitate translocation of its components between the nuclear and cytoplasmic compartments. Forms a scaffold complex with KHDC3L/FILIA, and interacts with BLM and TRIM25 at DNA replication forks.

It is found in the cytoplasm. It localises to the nucleus. Component of the subcortical maternal complex (SCMC), a multiprotein complex that plays a key role in early embryonic development. The SCMC complex is a structural constituent of cytoplasmic lattices, which consist in fibrous structures found in the cytoplasm of oocytes and preimplantation embryos. They are required to store maternal proteins critical for embryonic development, such as proteins that control epigenetic reprogramming of the preimplantation embryo, and prevent their degradation or activation. As part of the OOEP-KHDC3 scaffold, recruits BLM and TRIM25 to DNA replication forks, thereby promoting the ubiquitination of BLM by TRIM25, enhancing BLM retainment at replication forks and therefore promoting stalled replication fork restart. Positively regulates the homologous recombination-mediated DNA double-strand break (DSB) repair pathway by regulating ATM activation and RAD51 recruitment to DSBs in oocytes. Thereby contributes to oocyte survival and the resumption and completion of meiosis. In Homo sapiens (Human), this protein is Oocyte-expressed protein homolog.